We begin with the raw amino-acid sequence, 266 residues long: Type II iodothyronine deiodinase (266 aa).

Residues 1 to 9 are Lumenal-facing; that stretch reads MGLLSVDLL. Residues 10 to 34 form a helical; Signal-anchor for type III membrane protein membrane-spanning segment; the sequence is ITLQILPVFFSNCLFLALYDSVILL. Residues 35 to 266 lie on the Cytoplasmic side of the membrane; sequence KHVALLLSRS…KNFSKRUILD (232 aa). Selenocysteine 130 is a catalytic residue. Residues selenocysteine 130 and selenocysteine 263 are each a non-standard amino acid (selenocysteine).

Belongs to the iodothyronine deiodinase family. Predominantly monomer. Can form homodimers but homodimerization is not essential for enzyme activity. Interacts with USP20 and USP33. Interacts with MARCHF6. In terms of processing, ubiquitinated by MARCHF6, leading to its degradation by the proteasome. Deubiquitinated by USP20 and USP33. As to expression, expressed in mammary gland and in brain.

Its subcellular location is the endoplasmic reticulum membrane. The enzyme catalyses 3,3',5-triiodo-L-thyronine + iodide + A + H(+) = L-thyroxine + AH2. It carries out the reaction 3,3'-diiodo-L-thyronine + iodide + A + H(+) = 3,3',5'-triiodo-L-thyronine + AH2. It catalyses the reaction 3'-iodo-L-thyronine + iodide + A + H(+) = 3',5'-diiodo-L-thyronine + AH2. The catalysed reaction is 3,3'-diiodothyronamine + iodide + A + H(+) = 3,3',5'-triiodothyronamine + AH2. The enzyme catalyses 3'-iodothyronamine + iodide + A + H(+) = 3',5'-diiodothyronamine + AH2. Its function is as follows. Plays a crucial role in the metabolism of thyroid hormones (TH) and has specific roles in TH activation and inactivation by deiodination. Catalyzes the deiodination of L-thyroxine (T4) to 3,5,3'-triiodothyronine (T3) and 3,3',5'-triiodothyronine (rT3) to 3,3'-diiodothyronine (3,3'-T2) via outer-ring deiodination (ORD). Catalyzes the deiodination of 3',5'-diiodothyronine (3',5'-T2) to 3'-monoiodothyronine (3'-T1) via ORD. Catalyzes the phenolic ring deiodinations of 3,3',5'-triiodothyronamine and 3',5'- diiodothyronamine. This chain is Type II iodothyronine deiodinase (Dio2), found in Mus musculus (Mouse).